Here is a 494-residue protein sequence, read N- to C-terminus: MTSYLSNDTEAKLKKTKELPPHIHFIGIGGIGMSALAMILAQKGYSISGSDQKKNLTLKKLEENKVHIFPTQVESNIDEILKVHGKNILVVKSSAIHRDNLELCKAKKYNLKIKHRSEILAFLIEEKKSIIVSGSHGKTTTSTYITTLFSYANKSPTAIIGGIVPLYKSNYSFGKSEFLIAEADESDGSLVKFNPNIGLITNLELEHVDHYLDLEDLIETMKQFAQKCECLITNFDCDNLRANIHGSKWFSIQKIINIDFALIPKESNGCEIIAEYYEKEKFIDVIKIPVPGIHNLSNAAAAIAACRVAGILFKDIKKGIEKLKLPSRRFEFKGLWRNRLIVEDYAHHPSEIDAAISIASTIIETKHKLSKILPRRIVTIFQPHRYSRTKKFQKEFAKTLSQSDLVFITPIYSAGEDKIEGINNKSIGHELKKIKPNLEIYTPDNNQNLIKLIKEKTLENDLILIMGAGDINLISENLFLELLNNKLISNDIAA.

An ATP-binding site is contributed by 134-140 (GSHGKTT).

Belongs to the MurCDEF family.

Its subcellular location is the cytoplasm. It carries out the reaction UDP-N-acetyl-alpha-D-muramate + L-alanine + ATP = UDP-N-acetyl-alpha-D-muramoyl-L-alanine + ADP + phosphate + H(+). It participates in cell wall biogenesis; peptidoglycan biosynthesis. In terms of biological role, cell wall formation. The polypeptide is UDP-N-acetylmuramate--L-alanine ligase (Prochlorococcus marinus (strain NATL1A)).